We begin with the raw amino-acid sequence, 287 residues long: Large ribosomal subunit protein uL5m (287 aa).

The transit peptide at 1-18 (MLGIRKNIRISVNFLQRR) directs the protein to the mitochondrion. Basic and acidic residues predominate over residues 80–89 (DEHTQKDRLP). The segment at 80–109 (DEHTQKDRLPRWIGDNPYYKNRPPQKMRGN) is disordered.

Belongs to the universal ribosomal protein uL5 family. As to quaternary structure, component of the mitochondrial large ribosomal subunit (mt-LSU). Mature yeast 74S mitochondrial ribosomes consist of a small (37S) and a large (54S) subunit. The 37S small subunit contains a 15S ribosomal RNA (15S mt-rRNA) and at least 32 different proteins. The 54S large subunit contains a 21S rRNA (21S mt-rRNA) and at least 45 different proteins. Unlike bacterial L5, uL5m does not bind zinc.

It is found in the mitochondrion. Its function is as follows. Component of the mitochondrial ribosome (mitoribosome), a dedicated translation machinery responsible for the synthesis of mitochondrial genome-encoded proteins, including at least some of the essential transmembrane subunits of the mitochondrial respiratory chain. The mitoribosomes are attached to the mitochondrial inner membrane and translation products are cotranslationally integrated into the membrane. This Schizosaccharomyces pombe (strain 972 / ATCC 24843) (Fission yeast) protein is Large ribosomal subunit protein uL5m (mrpl7).